The primary structure comprises 546 residues: Chaperonin GroEL (546 aa).

ATP is bound by residues 29–32 (TMGP), K50, 86–90 (DGTTT), G412, 476–478 (NAA), and D492.

It belongs to the chaperonin (HSP60) family. As to quaternary structure, forms a cylinder of 14 subunits composed of two heptameric rings stacked back-to-back. Interacts with the co-chaperonin GroES.

Its subcellular location is the cytoplasm. The catalysed reaction is ATP + H2O + a folded polypeptide = ADP + phosphate + an unfolded polypeptide.. Its function is as follows. Together with its co-chaperonin GroES, plays an essential role in assisting protein folding. The GroEL-GroES system forms a nano-cage that allows encapsulation of the non-native substrate proteins and provides a physical environment optimized to promote and accelerate protein folding. In terms of biological role, may play a protective role against the defense mechanisms generated by the infected macrophages. The chain is Chaperonin GroEL from Legionella micdadei (Tatlockia micdadei).